Reading from the N-terminus, the 431-residue chain is L-cysteine:1D-myo-inositol 2-amino-2-deoxy-alpha-D-glucopyranoside ligase (431 aa).

Position 44 (Cys44) interacts with Zn(2+). L-cysteinyl-5'-AMP contacts are provided by residues 44 to 47 (CGIT), Thr59, and 82 to 84 (NVT). The 'HIGH' region motif lies at 46 to 56 (ITPYDATHLGH). Residues 187–192 (ERGGDP) carry the 'ERGGDP' region motif. L-cysteinyl-5'-AMP is bound at residue Trp227. Residue Cys231 participates in Zn(2+) binding. 249 to 251 (GND) contacts L-cysteinyl-5'-AMP. His256 contacts Zn(2+). Ile283 provides a ligand contact to L-cysteinyl-5'-AMP. A 'KMSKS' region motif is present at residues 289–293 (KMSKS).

The protein belongs to the class-I aminoacyl-tRNA synthetase family. MshC subfamily. As to quaternary structure, monomer. It depends on Zn(2+) as a cofactor.

The enzyme catalyses 1D-myo-inositol 2-amino-2-deoxy-alpha-D-glucopyranoside + L-cysteine + ATP = 1D-myo-inositol 2-(L-cysteinylamino)-2-deoxy-alpha-D-glucopyranoside + AMP + diphosphate + H(+). Functionally, catalyzes the ATP-dependent condensation of GlcN-Ins and L-cysteine to form L-Cys-GlcN-Ins. This is L-cysteine:1D-myo-inositol 2-amino-2-deoxy-alpha-D-glucopyranoside ligase from Stackebrandtia nassauensis (strain DSM 44728 / CIP 108903 / NRRL B-16338 / NBRC 102104 / LLR-40K-21).